A 25-amino-acid polypeptide reads, in one-letter code: Large ribosomal subunit protein uL30 (25 aa).

This sequence belongs to the universal ribosomal protein uL30 family. As to quaternary structure, part of the 50S ribosomal subunit.

The polypeptide is Large ribosomal subunit protein uL30 (rpmD) (Pseudomonas fluorescens biotype A).